The chain runs to 288 residues: F420-non-reducing hydrogenase vhu subunit G (288 aa).

The protein belongs to the [NiFe]/[NiFeSe] hydrogenase small subunit family. The F420-non-reducing hydrogenase vhu is composed of four subunits; VhuA, VhuD, VhuG and VhuU.

This is F420-non-reducing hydrogenase vhu subunit G (vhuG) from Methanocaldococcus jannaschii (strain ATCC 43067 / DSM 2661 / JAL-1 / JCM 10045 / NBRC 100440) (Methanococcus jannaschii).